The chain runs to 85 residues: U4-theraphotoxin-Hhn1a (85 aa).

The first 22 residues, 1-22 (MKVTLIAILTCAAVLVLHTTAA), serve as a signal peptide directing secretion. The propeptide occupies 23-48 (EELEAESQLMKVGMPDTELAAVDEER). Disulfide bonds link Cys-52-Cys-66, Cys-56-Cys-77, and Cys-71-Cys-82.

The protein belongs to the neurotoxin 12 (Hwtx-2) family. 02 (Hwtx-2) subfamily. Monomer. As to expression, expressed by the venom gland.

It localises to the secreted. In terms of biological role, neurotoxin active on both insects and mammals. The sequence is that of U4-theraphotoxin-Hhn1a from Cyriopagopus hainanus (Chinese bird spider).